A 156-amino-acid polypeptide reads, in one-letter code: Small ribosomal subunit protein uS7 (156 aa).

Belongs to the universal ribosomal protein uS7 family. As to quaternary structure, part of the 30S ribosomal subunit. Contacts proteins S9 and S11.

Its function is as follows. One of the primary rRNA binding proteins, it binds directly to 16S rRNA where it nucleates assembly of the head domain of the 30S subunit. Is located at the subunit interface close to the decoding center, probably blocks exit of the E-site tRNA. This chain is Small ribosomal subunit protein uS7, found in Clostridium acetobutylicum (strain ATCC 824 / DSM 792 / JCM 1419 / IAM 19013 / LMG 5710 / NBRC 13948 / NRRL B-527 / VKM B-1787 / 2291 / W).